We begin with the raw amino-acid sequence, 513 residues long: uncharacterized protein (513 aa).

2 disordered regions span residues 72–113 and 155–262; these read GVVP…TGQF and IMGG…NPRF. A compositionally biased stretch (low complexity) spans 82–106; it reads ANRTANPNTNSNPNPNATNAQPNPT. 2 stretches are compositionally biased toward polar residues: residues 164–189 and 210–228; these read EANSEQARNANTETSNPPFASAQTQG and TPLNQPPSYAASTQPEFQQ. A compositionally biased stretch (low complexity) spans 229–238; that stretch reads TTSPIFSSSS. A compositionally biased stretch (pro residues) spans 239–248; that stretch reads TPPPPPPRPS. A compositionally biased stretch (polar residues) spans 253 to 262; sequence GESQNTNPRF. The RING-type; atypical zinc finger occupies 396-437; that stretch reads CTICMEMFKINDDVIQLPCKHYFHENCIKPWLRVNGTCAICR. Residues 439–513 are disordered; the sequence is PVDPNSQQRN…DDFVDEEPLE (75 aa). The segment covering 442 to 493 has biased composition (polar residues); that stretch reads PNSQQRNNTSTDSANGHNPSNHANPSTSTTNDQGATLRNESFNAASQSNLSS.

This is an uncharacterized protein from Schizosaccharomyces pombe (strain 972 / ATCC 24843) (Fission yeast).